Consider the following 584-residue polypeptide: Potassium-transporting ATPase potassium-binding subunit (584 aa).

10 consecutive transmembrane segments (helical) span residues 8 to 28, 65 to 85, 139 to 159, 172 to 192, 262 to 282, 292 to 312, 398 to 418, 440 to 460, 507 to 527, and 544 to 564; these read FLVL…EFMF, SFAV…FILQ, VQNF…IYGF, VLLL…ALVL, FTDL…CFMF, GIAI…LGIW, GLYC…LMVG, ILIP…ITAG, MFVG…AFVA, and LFII…FLPA.

The protein belongs to the KdpA family. As to quaternary structure, the system is composed of three essential subunits: KdpA, KdpB and KdpC.

The protein resides in the cell membrane. Part of the high-affinity ATP-driven potassium transport (or Kdp) system, which catalyzes the hydrolysis of ATP coupled with the electrogenic transport of potassium into the cytoplasm. This subunit binds the extracellular potassium ions and delivers the ions to the membrane domain of KdpB through an intramembrane tunnel. This is Potassium-transporting ATPase potassium-binding subunit from Methanoregula boonei (strain DSM 21154 / JCM 14090 / 6A8).